Reading from the N-terminus, the 171-residue chain is Protein-export protein SecB (171 aa).

This sequence belongs to the SecB family. In terms of assembly, homotetramer, a dimer of dimers. One homotetramer interacts with 1 SecA dimer.

It localises to the cytoplasm. In terms of biological role, one of the proteins required for the normal export of preproteins out of the cell cytoplasm. It is a molecular chaperone that binds to a subset of precursor proteins, maintaining them in a translocation-competent state. It also specifically binds to its receptor SecA. The protein is Protein-export protein SecB of Jannaschia sp. (strain CCS1).